We begin with the raw amino-acid sequence, 348 residues long: MPVERMRMRPWLEEQINSNTIPGLKWINKEKKIFQIPWMHAARHGWDVEKDAPLFRNWAIHTGKYQSGVDKPDPKTWKANFRCAMNSLPDIEEVKDKSIKKGNNAFRVYRMLPLSERPSKKGKKTKSEKDDKFKQIKQEPVESSFGINGLNDVTSDYFLSSSIKNEVDSTVNIVVVGQPHLDGSSEEQVIVANPPDVCQVVEVTTESDEQPLSMSQLYPLQISPVSSYAESETTDSVPSDEENAEGRLHWQKKNIEGKQYLSNLGMRNTSHMLPSMATFVANKPDLQVTIKEESCPLPYNSSWPPFPDIPLPQVVSTASTSSSRPDRETRASVIKKTSDITQSRVKSC.

Positions Arg-5 to Pro-113 form a DNA-binding region, IRF tryptophan pentad repeat. Residues Lys-75 and Lys-78 each carry the N6-acetyllysine modification. Positions Arg-117–Lys-137 are disordered. Basic and acidic residues predominate over residues Thr-125–Lys-137. Residues Lys-137, Lys-164, and Lys-291 each participate in a glycyl lysine isopeptide (Lys-Gly) (interchain with G-Cter in SUMO) cross-link. Residues Leu-311–Cys-348 form a disordered region. Composition is skewed to polar residues over residues Val-314–Ser-323 and Asp-339–Cys-348.

Belongs to the IRF family. As to quaternary structure, interacts with CREBBP in growing cells; the interaction acetylates IRF2 and regulates IRF2-dependent H4 promoter activity.

It is found in the nucleus. Functionally, specifically binds to the upstream regulatory region of type I IFN and IFN-inducible MHC class I genes (the interferon consensus sequence (ICS)) and represses those genes. Also acts as an activator for several genes including H4 and IL7. Constitutively binds to the ISRE promoter to activate IL7. Involved in cell cycle regulation through binding the site II (HiNF-M) promoter region of H4 and activating transcription during cell growth. Antagonizes IRF1 transcriptional activation. This is Interferon regulatory factor 2 (IRF2) from Gallus gallus (Chicken).